The sequence spans 703 residues: Polyribonucleotide nucleotidyltransferase (703 aa).

2 residues coordinate Mg(2+): Asp486 and Asp492. The KH domain occupies 553 to 614; the sequence is PRITTIWIKP…AACDAAIQMI (62 aa). One can recognise an S1 motif domain in the interval 624–692; that stretch reads GKLYMGTVKK…KQGKIKLSRK (69 aa).

This sequence belongs to the polyribonucleotide nucleotidyltransferase family. The cofactor is Mg(2+).

The protein resides in the cytoplasm. It carries out the reaction RNA(n+1) + phosphate = RNA(n) + a ribonucleoside 5'-diphosphate. Functionally, involved in mRNA degradation. Catalyzes the phosphorolysis of single-stranded polyribonucleotides processively in the 3'- to 5'-direction. In Trichlorobacter lovleyi (strain ATCC BAA-1151 / DSM 17278 / SZ) (Geobacter lovleyi), this protein is Polyribonucleotide nucleotidyltransferase.